The sequence spans 330 residues: MQGSVTEFLKPRLVDIEQISSTHAKVTLEPLERGFGHTLGNALRRILLSSMPGCAVTEVEIEGVLHEYSTKEGVQEDILEILLNLKGLAVRVAEGKDEVFITLNKSGSGPVVAGDITHDGDVEIANPEHVICHLTDDNAEIAMRIKVERGRGYVPASARIHNEEDERPIGRLLVDATYSPVDKIAYAVEAARVEQRTDLDKLVIDMETNGTLEPEEAIRRAATILAEQLDAFVDLRDVRVPEEKEEKPEFDPILLRPVDDLELTVRSANCLKAEAIHYIGDLVQRTEVELLKTPNLGKKSLTEIKDVLASRGLSLGMRLENWPPASIAED.

Residues 1–236 form an alpha N-terminal domain (alpha-NTD) region; that stretch reads MQGSVTEFLK…EQLDAFVDLR (236 aa). The alpha C-terminal domain (alpha-CTD) stretch occupies residues 250–330; the sequence is FDPILLRPVD…NWPPASIAED (81 aa).

Belongs to the RNA polymerase alpha chain family. In terms of assembly, homodimer. The RNAP catalytic core consists of 2 alpha, 1 beta, 1 beta' and 1 omega subunit. When a sigma factor is associated with the core the holoenzyme is formed, which can initiate transcription.

The enzyme catalyses RNA(n) + a ribonucleoside 5'-triphosphate = RNA(n+1) + diphosphate. Functionally, DNA-dependent RNA polymerase catalyzes the transcription of DNA into RNA using the four ribonucleoside triphosphates as substrates. The chain is DNA-directed RNA polymerase subunit alpha from Vibrio parahaemolyticus serotype O3:K6 (strain RIMD 2210633).